The following is a 347-amino-acid chain: tRNA pseudouridine synthase D (347 aa).

D81 (nucleophile) is an active-site residue. The TRUD domain occupies G158–K305.

Belongs to the pseudouridine synthase TruD family.

The enzyme catalyses uridine(13) in tRNA = pseudouridine(13) in tRNA. Functionally, responsible for synthesis of pseudouridine from uracil-13 in transfer RNAs. The chain is tRNA pseudouridine synthase D from Vibrio parahaemolyticus serotype O3:K6 (strain RIMD 2210633).